A 171-amino-acid polypeptide reads, in one-letter code: Orotate phosphoribosyltransferase (171 aa).

Residues R85, K86, R88, H90, and 110–118 (EDVVTTGNS) each bind 5-phospho-alpha-D-ribose 1-diphosphate. Orotate-binding residues include T114 and R142.

It belongs to the purine/pyrimidine phosphoribosyltransferase family. PyrE subfamily. In terms of assembly, homodimer. It depends on Mg(2+) as a cofactor.

It carries out the reaction orotidine 5'-phosphate + diphosphate = orotate + 5-phospho-alpha-D-ribose 1-diphosphate. The protein operates within pyrimidine metabolism; UMP biosynthesis via de novo pathway; UMP from orotate: step 1/2. Its function is as follows. Catalyzes the transfer of a ribosyl phosphate group from 5-phosphoribose 1-diphosphate to orotate, leading to the formation of orotidine monophosphate (OMP). In Thermoplasma acidophilum (strain ATCC 25905 / DSM 1728 / JCM 9062 / NBRC 15155 / AMRC-C165), this protein is Orotate phosphoribosyltransferase.